We begin with the raw amino-acid sequence, 377 residues long: Succinyl-diaminopimelate desuccinylase (377 aa).

His68 contributes to the Zn(2+) binding site. Asp70 is an active-site residue. Asp101 is a Zn(2+) binding site. Glu135 functions as the Proton acceptor in the catalytic mechanism. 3 residues coordinate Zn(2+): Glu136, Glu164, and His350.

Belongs to the peptidase M20A family. DapE subfamily. In terms of assembly, homodimer. Requires Zn(2+) as cofactor. Co(2+) is required as a cofactor.

The catalysed reaction is N-succinyl-(2S,6S)-2,6-diaminopimelate + H2O = (2S,6S)-2,6-diaminopimelate + succinate. The protein operates within amino-acid biosynthesis; L-lysine biosynthesis via DAP pathway; LL-2,6-diaminopimelate from (S)-tetrahydrodipicolinate (succinylase route): step 3/3. In terms of biological role, catalyzes the hydrolysis of N-succinyl-L,L-diaminopimelic acid (SDAP), forming succinate and LL-2,6-diaminopimelate (DAP), an intermediate involved in the bacterial biosynthesis of lysine and meso-diaminopimelic acid, an essential component of bacterial cell walls. The sequence is that of Succinyl-diaminopimelate desuccinylase from Acinetobacter baylyi (strain ATCC 33305 / BD413 / ADP1).